We begin with the raw amino-acid sequence, 266 residues long: Ribosomal RNA small subunit methyltransferase A (266 aa).

Residues H13, L15, G40, E61, D85, and N104 each contribute to the S-adenosyl-L-methionine site.

The protein belongs to the class I-like SAM-binding methyltransferase superfamily. rRNA adenine N(6)-methyltransferase family. RsmA subfamily.

It localises to the cytoplasm. It catalyses the reaction adenosine(1518)/adenosine(1519) in 16S rRNA + 4 S-adenosyl-L-methionine = N(6)-dimethyladenosine(1518)/N(6)-dimethyladenosine(1519) in 16S rRNA + 4 S-adenosyl-L-homocysteine + 4 H(+). In terms of biological role, specifically dimethylates two adjacent adenosines (A1518 and A1519) in the loop of a conserved hairpin near the 3'-end of 16S rRNA in the 30S particle. May play a critical role in biogenesis of 30S subunits. This chain is Ribosomal RNA small subunit methyltransferase A, found in Parabacteroides distasonis (strain ATCC 8503 / DSM 20701 / CIP 104284 / JCM 5825 / NCTC 11152).